Here is a 446-residue protein sequence, read N- to C-terminus: Exodeoxyribonuclease 7 large subunit (446 aa).

This sequence belongs to the XseA family. As to quaternary structure, heterooligomer composed of large and small subunits.

The protein resides in the cytoplasm. It carries out the reaction Exonucleolytic cleavage in either 5'- to 3'- or 3'- to 5'-direction to yield nucleoside 5'-phosphates.. In terms of biological role, bidirectionally degrades single-stranded DNA into large acid-insoluble oligonucleotides, which are then degraded further into small acid-soluble oligonucleotides. This Streptococcus pneumoniae serotype 19F (strain G54) protein is Exodeoxyribonuclease 7 large subunit.